Reading from the N-terminus, the 443-residue chain is ATP-dependent protease ATPase subunit HslU (443 aa).

Residues I18, 60-65, D256, E321, and R393 each bind ATP; that span reads GVGKTE.

It belongs to the ClpX chaperone family. HslU subfamily. As to quaternary structure, a double ring-shaped homohexamer of HslV is capped on each side by a ring-shaped HslU homohexamer. The assembly of the HslU/HslV complex is dependent on binding of ATP.

It localises to the cytoplasm. Its function is as follows. ATPase subunit of a proteasome-like degradation complex; this subunit has chaperone activity. The binding of ATP and its subsequent hydrolysis by HslU are essential for unfolding of protein substrates subsequently hydrolyzed by HslV. HslU recognizes the N-terminal part of its protein substrates and unfolds these before they are guided to HslV for hydrolysis. The sequence is that of ATP-dependent protease ATPase subunit HslU from Salmonella agona (strain SL483).